We begin with the raw amino-acid sequence, 447 residues long: MSYSVLEALRNNPDHVRKVLAARRLDVSLVDRFIELDGRWRQLKREVDELRRSYNQLSREGARAPPDRRREIVEKARELAARLEKVEKEMEAVEREREELLWSFPNLIHDSVPVCPEGVDSVPVRHWGTIRVVKGAAAPEGVEYVVVEKPPVGHADMAEVVLGMADTLKAGEVAGSRFYYLFDDLVWLDFALAMYALDRLAQQGFRPVVPPYMLKFDVIRRVLDFDTFKDAIYKIEGEDLYLIATAEHGIAAYLHKRELVEEELPLLFVGWSPCFRKEAGAGNRDLKGIFRVHIFHKVEQFVFSLPEDSWKWHEEITKNTESLIRDLGLPYRVVNICAHDLGAPAAKKYDIEAWYPAQGMYRELASCSNVTDWQSYRLGIRVTRKGMRREFVHTLNCTGLATTRTITAILENFQREDGAVEIPKALRPYLEPIRAAPKEYIYPRRRG.

245–247 provides a ligand contact to L-serine; it reads TAE. ATP contacts are provided by residues 276 to 278 and valine 292; that span reads RKE. Glutamate 299 lines the L-serine pocket. 363-366 contacts ATP; that stretch reads ELAS. Position 398 (threonine 398) interacts with L-serine.

It belongs to the class-II aminoacyl-tRNA synthetase family. Type-1 seryl-tRNA synthetase subfamily. Homodimer. The tRNA molecule binds across the dimer.

Its subcellular location is the cytoplasm. The enzyme catalyses tRNA(Ser) + L-serine + ATP = L-seryl-tRNA(Ser) + AMP + diphosphate + H(+). It carries out the reaction tRNA(Sec) + L-serine + ATP = L-seryl-tRNA(Sec) + AMP + diphosphate + H(+). It functions in the pathway aminoacyl-tRNA biosynthesis; selenocysteinyl-tRNA(Sec) biosynthesis; L-seryl-tRNA(Sec) from L-serine and tRNA(Sec): step 1/1. Functionally, catalyzes the attachment of serine to tRNA(Ser). Is also able to aminoacylate tRNA(Sec) with serine, to form the misacylated tRNA L-seryl-tRNA(Sec), which will be further converted into selenocysteinyl-tRNA(Sec). The chain is Serine--tRNA ligase from Pyrobaculum neutrophilum (strain DSM 2338 / JCM 9278 / NBRC 100436 / V24Sta) (Thermoproteus neutrophilus).